Reading from the N-terminus, the 303-residue chain is MTVTQTNLDGILPLVARGKVRDIYQVDDNMLLFVATDRISAYDVIMENGIKDKGKILTQLSVFWFNLLSDVIPNHLVASSDKDIFAKLPEQLSEPKYKAQLAGRSLLVKKHKLVPLEAIVRGYITGSAWKEYKKSSTVHGLPVKSGLQESEAFEKPIFTPSTKAEQGQHDENISPEQAAQLVGEELCAEVAQKAIALYSKARDYALSRGIILADTKFEFGLNENNELVLVDEVLTPDSSRFWDAKKYELGRSQESFDKQFLRDWLTSHQLNGKEGVSMTEEIAAKTAAKYKEAYEALTGKTWA.

The protein belongs to the SAICAR synthetase family.

It catalyses the reaction 5-amino-1-(5-phospho-D-ribosyl)imidazole-4-carboxylate + L-aspartate + ATP = (2S)-2-[5-amino-1-(5-phospho-beta-D-ribosyl)imidazole-4-carboxamido]succinate + ADP + phosphate + 2 H(+). Its pathway is purine metabolism; IMP biosynthesis via de novo pathway; 5-amino-1-(5-phospho-D-ribosyl)imidazole-4-carboxamide from 5-amino-1-(5-phospho-D-ribosyl)imidazole-4-carboxylate: step 1/2. The polypeptide is Phosphoribosylaminoimidazole-succinocarboxamide synthase (ADE1) (Pichia angusta (Yeast)).